The following is a 631-amino-acid chain: Eukaryotic translation initiation factor 2-alpha kinase 1 (631 aa).

The interval 1–34 is disordered; the sequence is MQGGNSGVRKREEEGGGEGAVAAPPAIDFPAESS. Positions 85-104 match the SIFI-degron motif; the sequence is LRSRQVFKLLCQTFIKMGLL. Positions 167–583 constitute a Protein kinase domain; that stretch reads FEEVAILGKG…AVQLLQSELF (417 aa). ATP contacts are provided by residues 173 to 181 and Lys-196; that span reads LGKGGYGRV. The disordered stretch occupies residues 260–301; sequence QEEDREQYDVKNDESSSSSIVFAEPTPEKGKRFGESDTENQN. Thr-285 bears the Phosphothreonine mark. The segment covering 285–301 has biased composition (basic and acidic residues); the sequence is TPEKGKRFGESDTENQN. The HRM 1 repeat unit spans residues 410–415; that stretch reads ACPYVM. Asp-442 acts as the Proton acceptor in catalysis. Phosphothreonine; by autocatalysis is present on residues Thr-486 and Thr-488. Thr-493 is subject to Phosphothreonine. Residues 552–557 form an HRM 2 repeat; the sequence is RCPVQA.

It belongs to the protein kinase superfamily. Ser/Thr protein kinase family. GCN2 subfamily. As to quaternary structure, synthesized in an inactive form that binds to the N-terminal domain of CDC37. Has to be associated with a multiprotein complex containing Hsp90, CDC37 and PPP5C for maturation and activation by autophosphorylation. The phosphatase PPP5C modulates this activation. Homodimer; homodimerizes in presence of heme, forming a disulfide-linked inactive homodimer. Interacts with DELE1; binds both to full-length DELE1 and processed form of DELE1 (S-DELE1) in response to stress, leading to activate its protein kinase activity and trigger the integrated stress response (ISR). Activated by autophosphorylation; phosphorylated predominantly on serine and threonine residues, but also on tyrosine residues. Autophosphorylation at Thr-488 is required for kinase activation. The active autophosphorylated form apparently is largely refractory to cellular heme fluctuations. In terms of processing, ubiquitinated and degraded by the SIFI complex once the mitochondrial stress has been resolved, thereby providing stress response silencing. Within the SIFI complex, UBR4 initiates ubiquitin chain that are further elongated or branched by KCMF1.

It is found in the cytoplasm. It carries out the reaction L-seryl-[protein] + ATP = O-phospho-L-seryl-[protein] + ADP + H(+). The enzyme catalyses L-threonyl-[protein] + ATP = O-phospho-L-threonyl-[protein] + ADP + H(+). In normal conditions, the protein kinase activity is inhibited; inhibition is relieved by various stress conditions. Inhibited by heme: in presence of heme, forms a disulfide-linked inactive homodimer. Heme depletion relieves inhibition and stimulates kinase activity by autophosphorylation. Inhibited by the heme metabolites biliverdin and bilirubin. Induced by oxidative stress generated by arsenite treatment. Binding of nitric oxide (NO) to the heme iron in the N-terminal heme-binding domain activates the kinase activity, while binding of carbon monoxide (CO) suppresses kinase activity. Protein kinase activity is also activated upon binding to DELE1 in response to various stress, triggering the integrated stress response (ISR): activated by full-length DELE1 in response to iron deficiency, while it is activated by the processed form of DELE1 (S-DELE1) in response to mitochondrial stress. In terms of biological role, metabolic-stress sensing protein kinase that phosphorylates the alpha subunit of eukaryotic translation initiation factor 2 (EIF2S1/eIF-2-alpha) in response to various stress conditions. Key activator of the integrated stress response (ISR) required for adaptation to various stress, such as heme deficiency, oxidative stress, osmotic shock, mitochondrial dysfunction and heat shock. EIF2S1/eIF-2-alpha phosphorylation in response to stress converts EIF2S1/eIF-2-alpha in a global protein synthesis inhibitor, leading to a global attenuation of cap-dependent translation, while concomitantly initiating the preferential translation of ISR-specific mRNAs, such as the transcriptional activator ATF4, and hence allowing ATF4-mediated reprogramming. Acts as a key sensor of heme-deficiency: in normal conditions, binds hemin via a cysteine thiolate and histidine nitrogenous coordination, leading to inhibit the protein kinase activity. This binding occurs with moderate affinity, allowing it to sense the heme concentration within the cell: heme depletion relieves inhibition and stimulates kinase activity, activating the ISR. Thanks to this unique heme-sensing capacity, plays a crucial role to shut off protein synthesis during acute heme-deficient conditions. In red blood cells (RBCs), controls hemoglobin synthesis ensuring a coordinated regulation of the synthesis of its heme and globin moieties. It thereby plays an essential protective role for RBC survival in anemias of iron deficiency. Iron deficiency also triggers activation by full-length DELE1. Also activates the ISR in response to mitochondrial dysfunction: HRI/EIF2AK1 protein kinase activity is activated upon binding to the processed form of DELE1 (S-DELE1), thereby promoting the ATF4-mediated reprogramming. Also acts as an activator of mitophagy in response to mitochondrial damage: catalyzes phosphorylation of eIF-2-alpha (EIF2S1) following activation by S-DELE1, thereby promoting mitochondrial localization of EIF2S1, triggering PRKN-independent mitophagy. The sequence is that of Eukaryotic translation initiation factor 2-alpha kinase 1 from Macaca fascicularis (Crab-eating macaque).